A 326-amino-acid polypeptide reads, in one-letter code: Protein spaetzle (326 aa).

An N-terminal signal peptide occupies residues 1-25 (MMTPMWISLFKVLLLLFAFFATYEA). N48 carries N-linked (GlcNAc...) asparagine glycosylation. The disordered stretch occupies residues 56 to 82 (FMPIPTQHDDPTQKQKQNQNQSPIPET). Residues 69–80 (KQKQNQNQSPIP) are compositionally biased toward polar residues. N-linked (GlcNAc...) asparagine glycosylation is found at N114 and N164. A disordered region spans residues 152 to 174 (YRPPQSPARPLRNDTKEHNPCAK). The span at 162–174 (LRNDTKEHNPCAK) shows a compositional bias: basic and acidic residues. The region spanning 228–322 (FLCRSIRKLV…FKIPSCCKCA (95 aa)) is the Spaetzle domain. 3 disulfides stabilise this stretch: C230–C288, C267–C319, and C274–C321.

In terms of assembly, homodimer; disulfide-linked. In the presence of Tl, crystal structures show one Tl molecule bound to a spaetzle C-106 homodimer. However, the active complex probably consists of two Tl molecules bound to a spaetzle C-106 homodimer. This is supported by in vitro experiments which also show binding of the spaetzle C-106 dimer to 2 Tl receptors. Ligand binding induces conformational changes in the extracellular domain of Tl. This may enable a secondary homodimerization interface at the C-terminus of the Tl extracellular domain. In terms of processing, during embryonic development proteolytically processed by activated ea/easter; ea cleaves the signal peptide and also generates the C-terminal 12 kDa active ligand for the Toll receptor, C-106 (except for isoform 8.24 and isoform 11.27 as they do not contain the cleavage site). During the immune response, cleaved in the same manner by SPE. Post-translationally, extracellular forms of isoform 8.19 and isoform 11.7 are glycosylated.

The protein resides in the secreted. In terms of biological role, the activated form, spaetzle C-106, acts as a ligand for the Toll receptor. Binding to Toll activates the Toll signaling pathway and induces expression of the antifungal peptide drosomycin. Component of the extracellular signaling pathway that establishes dorsal-ventral polarity in the embryo. This Drosophila melanogaster (Fruit fly) protein is Protein spaetzle.